We begin with the raw amino-acid sequence, 324 residues long: Beta-ketoacyl-[acyl-carrier-protein] synthase III (324 aa).

Catalysis depends on residues Cys112 and His249. Residues 250-254 (QANRR) are ACP-binding. The active site involves Asn279.

The protein belongs to the thiolase-like superfamily. FabH family. In terms of assembly, homodimer.

The protein localises to the cytoplasm. It carries out the reaction malonyl-[ACP] + acetyl-CoA + H(+) = 3-oxobutanoyl-[ACP] + CO2 + CoA. It participates in lipid metabolism; fatty acid biosynthesis. In terms of biological role, catalyzes the condensation reaction of fatty acid synthesis by the addition to an acyl acceptor of two carbons from malonyl-ACP. Catalyzes the first condensation reaction which initiates fatty acid synthesis and may therefore play a role in governing the total rate of fatty acid production. Possesses both acetoacetyl-ACP synthase and acetyl transacylase activities. Its substrate specificity determines the biosynthesis of branched-chain and/or straight-chain of fatty acids. The polypeptide is Beta-ketoacyl-[acyl-carrier-protein] synthase III (Streptococcus pyogenes serotype M6 (strain ATCC BAA-946 / MGAS10394)).